The following is a 914-amino-acid chain: Translation initiation factor IF-2 (914 aa).

Residues 58–160 (KTEKKQTAKK…EAEPKIEVMP (103 aa)) form a disordered region. Basic and acidic residues predominate over residues 70–91 (KKDTVKKDTVKKTAVKKDDSKA). Positions 92–103 (AKKTKPIAKKSA) are enriched in basic residues. Residues 104 to 160 (PKTEKKVEKKVESKISKPDNEILEAKPEISKPEIKAEPKKEEIEQKQEAEPKIEVMP) are compositionally biased toward basic and acidic residues. One can recognise a tr-type G domain in the interval 413 to 582 (ERVPVITIMG…LLQADLLELK (170 aa)). The segment at 422-429 (GHVDHGKT) is G1. 422–429 (GHVDHGKT) is a GTP binding site. Residues 447-451 (GITQH) form a G2 region. The tract at residues 468–471 (DTPG) is G3. GTP-binding positions include 468–472 (DTPGH) and 522–525 (NKMD). The segment at 522-525 (NKMD) is G4. The segment at 558–560 (SAK) is G5.

The protein belongs to the TRAFAC class translation factor GTPase superfamily. Classic translation factor GTPase family. IF-2 subfamily.

The protein resides in the cytoplasm. One of the essential components for the initiation of protein synthesis. Protects formylmethionyl-tRNA from spontaneous hydrolysis and promotes its binding to the 30S ribosomal subunits. Also involved in the hydrolysis of GTP during the formation of the 70S ribosomal complex. This Campylobacter hominis (strain ATCC BAA-381 / DSM 21671 / CCUG 45161 / LMG 19568 / NCTC 13146 / CH001A) protein is Translation initiation factor IF-2.